We begin with the raw amino-acid sequence, 91 residues long: Signal recognition particle 19 kDa protein (91 aa).

The protein belongs to the SRP19 family. Part of the signal recognition particle protein translocation system, which is composed of SRP and FtsY. Archaeal SRP consists of a 7S RNA molecule of 300 nucleotides and two protein subunits: SRP54 and SRP19.

It is found in the cytoplasm. Its function is as follows. Involved in targeting and insertion of nascent membrane proteins into the cytoplasmic membrane. Binds directly to 7S RNA and mediates binding of the 54 kDa subunit of the SRP. This Methanoregula boonei (strain DSM 21154 / JCM 14090 / 6A8) protein is Signal recognition particle 19 kDa protein.